The chain runs to 277 residues: Large ribosomal subunit protein uL2 (277 aa).

Disordered regions lie at residues 35-60 (EKQSKKAGRNNNGHITTRHQGGGHKQ) and 225-277 (MNPV…ANKR). Over residues 43–53 (RNNNGHITTRH) the composition is skewed to polar residues.

Belongs to the universal ribosomal protein uL2 family. Part of the 50S ribosomal subunit. Forms a bridge to the 30S subunit in the 70S ribosome.

One of the primary rRNA binding proteins. Required for association of the 30S and 50S subunits to form the 70S ribosome, for tRNA binding and peptide bond formation. It has been suggested to have peptidyltransferase activity; this is somewhat controversial. Makes several contacts with the 16S rRNA in the 70S ribosome. This is Large ribosomal subunit protein uL2 from Methylobacillus flagellatus (strain ATCC 51484 / DSM 6875 / VKM B-1610 / KT).